A 552-amino-acid polypeptide reads, in one-letter code: Steroid transmembrane transporter SLC22A24 (552 aa).

The next 12 membrane-spanning stretches (helical) occupy residues 16-36 (FQILQIAFFFVTSMITYTHIL), 144-164 (LKSVVQTLFMSGSLLGGLMFG), 175-197 (IYTWCLLQTAIADTCAIFAPTFV), 201-220 (IFRFLAGLTTINIMTNAFIL), 232-252 (IGITLILCSYSIGQMLLGGLA), 255-275 (IRDWYTLHLTVSIPLFVLSLL), 349-369 (IICFLSFIRLGASVPFMGLIL), 371-391 (LQDLGSSIFLFQVLFGAITFI), 407-427 (INQSLFFFLVGLCILVNTFLS), 435-455 (VVLATLGIGTVSAANATFFVH), 474-494 (VFSRMGSVLAPLLMTLVVYSP), and 496-516 (LPWVMYGVFPILAGLIVFCLP).

This sequence belongs to the major facilitator (TC 2.A.1) superfamily. Organic cation transporter (TC 2.A.1.19) family.

It localises to the cell membrane. The enzyme catalyses estrone 3-sulfate(out) + glutarate(in) = estrone 3-sulfate(in) + glutarate(out). The catalysed reaction is 17beta-estradiol 17-O-(beta-D-glucuronate)(out) + glutarate(in) = 17beta-estradiol 17-O-(beta-D-glucuronate)(in) + glutarate(out). It catalyses the reaction taurocholate(out) + glutarate(in) = taurocholate(in) + glutarate(out). It carries out the reaction 5alpha-androstane-3alpha,17beta-diol 3-O-(beta-D-glucuronate)(out) + glutarate(in) = 5alpha-androstane-3alpha,17beta-diol 3-O-(beta-D-glucuronate)(in) + glutarate(out). The enzyme catalyses glycocholate(out) + glutarate(in) = glycocholate(in) + glutarate(out). The catalysed reaction is dehydroepiandrosterone 3-sulfate(out) + glutarate(in) = dehydroepiandrosterone 3-sulfate(in) + glutarate(out). It catalyses the reaction glutarate(in) + succinate(out) = glutarate(out) + succinate(in). In terms of biological role, renal transmembrane organic anion/dicarboxylate exchanger that participates in the reabsorption of conjugated steroids, as well as bile acids, driven by an outward gradient of dicarboxylates such as glutarate or succinate. Transports androstanediol glucuronide (5alpha-androstane-3alpha,17beta-diol 3-O-(beta-D-glucuronate)), estrone 3-sulfate, and estradiol-17-glucuronide (17beta-estradiol 17-O-(beta-D-glucuronate)), and taurocholate. In Oryctolagus cuniculus (Rabbit), this protein is Steroid transmembrane transporter SLC22A24.